A 135-amino-acid chain; its full sequence is MIVGIGSDLCDIRRIERSLERFGERFTQRVFTPGERARSDRRAARAPSYARRFAAKEACAKALGTGLSQGVFWRDMEVVNLPSGAPTLRLTGGAAARLAALVPPGHRARLHVSLTDDPPLAQAFVVIEALRDESC.

Residues Asp-8 and Glu-57 each contribute to the Mg(2+) site.

Belongs to the P-Pant transferase superfamily. AcpS family. Mg(2+) is required as a cofactor.

The protein resides in the cytoplasm. The enzyme catalyses apo-[ACP] + CoA = holo-[ACP] + adenosine 3',5'-bisphosphate + H(+). Its function is as follows. Transfers the 4'-phosphopantetheine moiety from coenzyme A to a Ser of acyl-carrier-protein. This chain is Holo-[acyl-carrier-protein] synthase, found in Methylobacterium sp. (strain 4-46).